The following is a 356-amino-acid chain: tRNA N6-adenosine threonylcarbamoyltransferase (356 aa).

Fe cation-binding residues include His-115 and His-119. Residues 138–142, Asp-171, Gly-184, and Asn-283 each bind substrate; that span reads LVSGG. Asp-311 is a Fe cation binding site.

This sequence belongs to the KAE1 / TsaD family. Fe(2+) serves as cofactor.

The protein resides in the cytoplasm. The catalysed reaction is L-threonylcarbamoyladenylate + adenosine(37) in tRNA = N(6)-L-threonylcarbamoyladenosine(37) in tRNA + AMP + H(+). Its function is as follows. Required for the formation of a threonylcarbamoyl group on adenosine at position 37 (t(6)A37) in tRNAs that read codons beginning with adenine. Is involved in the transfer of the threonylcarbamoyl moiety of threonylcarbamoyl-AMP (TC-AMP) to the N6 group of A37, together with TsaE and TsaB. TsaD likely plays a direct catalytic role in this reaction. This Prochlorococcus marinus (strain MIT 9515) protein is tRNA N6-adenosine threonylcarbamoyltransferase.